A 105-amino-acid polypeptide reads, in one-letter code: Flagellar transcriptional regulator FlhD (105 aa).

Belongs to the FlhD family. Homodimer; disulfide-linked. Forms a heterohexamer composed of two FlhC and four FlhD subunits. Each FlhC binds a FlhD dimer, forming a heterotrimer, and a hexamer assembles by dimerization of two heterotrimers.

Its subcellular location is the cytoplasm. Functions in complex with FlhC as a master transcriptional regulator that regulates transcription of several flagellar and non-flagellar operons by binding to their promoter region. Activates expression of class 2 flagellar genes, including fliA, which is a flagellum-specific sigma factor that turns on the class 3 genes. Also regulates genes whose products function in a variety of physiological pathways. In Ralstonia pickettii (strain 12J), this protein is Flagellar transcriptional regulator FlhD.